Here is a 335-residue protein sequence, read N- to C-terminus: Malate dehydrogenase (335 aa).

11–17 (GAAGQIG) contributes to the NAD(+) binding site. Substrate contacts are provided by Arg94 and Arg100. NAD(+) contacts are provided by residues Asn107, Gln114, and 131-133 (VGN). Substrate contacts are provided by Asn133 and Arg167. The active-site Proton acceptor is His192.

Belongs to the LDH/MDH superfamily. MDH type 2 family.

It catalyses the reaction (S)-malate + NAD(+) = oxaloacetate + NADH + H(+). Catalyzes the reversible oxidation of malate to oxaloacetate. This chain is Malate dehydrogenase, found in Bdellovibrio bacteriovorus (strain ATCC 15356 / DSM 50701 / NCIMB 9529 / HD100).